The chain runs to 616 residues: MERKPLELESTDNHQNPSSAVYGGSVTAVDSVEEDVQNQKKVVYRGWKVMPFIIGNETFEKLGIIGTLSNLLVYLTAVFNLKSITAATIINAFSGTINFGTFVAAFLCDTYFGRYKTLSVAVIACFLGSFVILLTAAVPQLHPAACGTAADSICNGPSGGQIAFLLMGLGFLVVGAGGIRPCNLAFGADQFNPKSESGKRGIDSFFNWYFFTFTFAQILSLTLVVYVQSNVSWTIGLTIPAVLMFLACLIFFAGDKLYVKIKASGSPLAGIAQVIAVAIKKRGLKPAKQPWLNLYNYYPPKYANSKLKYTDQFRFLDKAAILTPEDKLQPDGKPADPWKLCTMQQVEEVKCIVRVLPIWFASSIYYLTITQQMTYPVFQALQSDRRLGSGGFVIPAATYVVFLMTGMTVFIVVYDRVLVPTMRRITGLDTGITLLQRIGTGIFFATASLVVAGFVEERRRTFALTKPTLGMAPRKGEISSMSAMWLIPQLSLAGVAEAFAAIGQMEFYYKQFPENMRSFAGSIFYVGGGVSSYLGSFLIATVHRTTQNSSGGNWLAEDLNKGRLDLFYFMIAGILAVNFAYFLVMSRWYRYKGSDDEVTTYETNENIIKQQDKNVA.

The segment at 1–22 (MERKPLELESTDNHQNPSSAVY) is disordered. 12 consecutive transmembrane segments (helical) span residues 59-79 (FEKL…TAVF), 87-107 (ATII…AAFL), 118-138 (LSVA…TAAV), 159-179 (GGQI…AGGI), 205-225 (FFNW…TLVV), 233-253 (WTIG…IFFA), 349-369 (VKCI…YLTI), 392-412 (FVIP…VFIV), 435-455 (LQRI…AGFV), 483-503 (AMWL…AAIG), 519-539 (FAGS…SFLI), and 566-586 (LFYF…LVMS).

This sequence belongs to the major facilitator superfamily. Proton-dependent oligopeptide transporter (POT/PTR) (TC 2.A.17) family. In terms of tissue distribution, expressed in roots. Detected in shoots, stems and flowers. Expressed in veins and in the root vasculature with highest expression in lateral branching points.

The protein resides in the cell membrane. Its function is as follows. High-affinity, proton-dependent glucosinolate-specific transporter. Involved in apoplasmic phloem-loading of glucosinolates and in bidirectional long-distance transport of aliphatic but not indole glucosinolates. May be involved in removal of glucosinolates from the xylem in roots. The chain is Protein NRT1/ PTR FAMILY 2.11 (NPF2.11) from Arabidopsis thaliana (Mouse-ear cress).